The chain runs to 415 residues: Maintenance of mitochondrial morphology protein 1 (415 aa).

Residues 1 to 18 lie on the Lumenal side of the membrane; sequence MADICPSRSEPTLSFTQG. A helical transmembrane segment spans residues 19–39; the sequence is LILGQLSVVLLLAAFIKFFIF. Over 40–415 the chain is Cytoplasmic; it reads GDPPSPEVVA…MPGSMPGSMP (376 aa). Positions 114–330 constitute an SMP-LTD domain; that stretch reads QPESLDWFNV…EPRFQEIALP (217 aa). Over residues 373 to 389 the composition is skewed to basic and acidic residues; sequence IEAEAHGGADRVPDSLR. The disordered stretch occupies residues 373 to 415; that stretch reads IEAEAHGGADRVPDSLRYRHRPRADEEFPGAGSMPGSMPGSMP. Low complexity predominate over residues 404 to 415; the sequence is GSMPGSMPGSMP.

The protein belongs to the MMM1 family. In terms of assembly, homodimer. Component of the ER-mitochondria encounter structure (ERMES) or MDM complex, composed of mmm-1, mdm10, mdm12 and mdm34. A mmm-1 homodimer associates with one molecule of mdm12 on each side in a pairwise head-to-tail manner, and the SMP-LTD domains of mmm-1 and mdm12 generate a continuous hydrophobic tunnel for phospholipid trafficking.

The protein localises to the endoplasmic reticulum membrane. Its function is as follows. Component of the ERMES/MDM complex, which serves as a molecular tether to connect the endoplasmic reticulum (ER) and mitochondria. Components of this complex are involved in the control of mitochondrial shape and protein biogenesis, and function in nonvesicular lipid trafficking between the ER and mitochondria. The mdm12-mmm-1 subcomplex functions in the major beta-barrel assembly pathway that is responsible for biogenesis of all outer membrane beta-barrel proteins, and acts in a late step after the SAM complex. The mdm10-mdm12-mmm-1 subcomplex further acts in the TOM40-specific pathway after the action of the mdm12-mmm-1 complex. Essential for establishing and maintaining the structure of mitochondria and maintenance of mtDNA nucleoids. The chain is Maintenance of mitochondrial morphology protein 1 (mmm-1) from Neurospora crassa (strain ATCC 24698 / 74-OR23-1A / CBS 708.71 / DSM 1257 / FGSC 987).